Reading from the N-terminus, the 375-residue chain is Tyrosine--tRNA ligase (375 aa).

Residues Tyr37, Tyr168, Gln172, Asp175, and Gln190 each contribute to the L-tyrosine site. Residues 251–255 (KMSKS) carry the 'KMSKS' region motif. Residue Lys254 participates in ATP binding.

Belongs to the class-I aminoacyl-tRNA synthetase family. TyrS type 4 subfamily. As to quaternary structure, homodimer.

Its subcellular location is the cytoplasm. The enzyme catalyses tRNA(Tyr) + L-tyrosine + ATP = L-tyrosyl-tRNA(Tyr) + AMP + diphosphate + H(+). In terms of biological role, catalyzes the attachment of tyrosine to tRNA(Tyr) in a two-step reaction: tyrosine is first activated by ATP to form Tyr-AMP and then transferred to the acceptor end of tRNA(Tyr). The sequence is that of Tyrosine--tRNA ligase from Pyrococcus horikoshii (strain ATCC 700860 / DSM 12428 / JCM 9974 / NBRC 100139 / OT-3).